A 247-amino-acid polypeptide reads, in one-letter code: UDP-N-acetyl-D-mannosaminuronic acid transferase (247 aa).

It belongs to the glycosyltransferase 26 family.

It carries out the reaction UDP-N-acetyl-alpha-D-mannosaminouronate + N-acetyl-alpha-D-glucosaminyl-di-trans,octa-cis-undecaprenyl diphosphate = beta-D-ManNAcA-(1-&gt;4)-alpha-D-GlcNAc-di-trans,octa-cis-undecaprenyl diphosphate + UDP + H(+). It participates in bacterial outer membrane biogenesis; enterobacterial common antigen biosynthesis. Its function is as follows. Catalyzes the synthesis of Und-PP-GlcNAc-ManNAcA (Lipid II), the second lipid-linked intermediate involved in enterobacterial common antigen (ECA) synthesis. The chain is UDP-N-acetyl-D-mannosaminuronic acid transferase from Enterobacter sp. (strain 638).